A 382-amino-acid polypeptide reads, in one-letter code: MIKLENLTKQFVQKKGQPLKAVDNVNLNVPEGEMCVLLGPSGCGKTTTLKMINRLIAPSSGNILINGENTNDMDAVTLRRNIGYVIQQIGLFPNMTIEENITVVPRMLGWDKARCKQRAEELMDMVALDARKFLHRYPKEMSGGQQQRIGVIRALAADPPVLLMDEPFGAVDPINREVIQNQFLDMQRKLKKTVMLVSHDIDEALKLGDRIAVFRQGRIVQCASPDELLAKPANEFVGSFVGQDRTLKRLLLVSAGDVTDQQPTITARPSTPLSEAFGIMDDHDIRAITVIDNDGKPLGFVKRREARNASGICADITHPFRITGKAEDNLRIVLSRLYESNTSWMPIVDEDGRYNGEISQDYIADYLSSGRTRRALNIHENS.

One can recognise an ABC transporter domain in the interval 2-241 (IKLENLTKQF…PANEFVGSFV (240 aa)). Residue 39 to 46 (GPSGCGKT) participates in ATP binding. CBS domains lie at 258 to 320 (VTDQ…THPF) and 322 to 373 (ITGK…GRTR).

It belongs to the ABC transporter superfamily. The complex is composed of two ATP-binding proteins (OsmV), two transmembrane proteins (OsmW and OsmY) and a solute-binding protein (OsmX).

Its subcellular location is the cell inner membrane. Functionally, part of the OsmU ABC transporter complex, which is involved in the uptake of osmoprotectants such as choline-O-sulfate and glycine betaine. Probably responsible for energy coupling to the transport system. The protein is Osmoprotectant import ATP-binding protein OsmV (osmV) of Salmonella typhimurium (strain LT2 / SGSC1412 / ATCC 700720).